The primary structure comprises 435 residues: Hyaluronidase-1 (435 aa).

The first 21 residues, 1–21 (MAAHLLPICTLFLNLLSVAQG), serve as a signal peptide directing secretion. Disulfide bonds link Cys-43–Cys-333 and Cys-207–Cys-221. Residues Asn-70, Asn-99, Asn-107, and Asn-121 are each glycosylated (N-linked (GlcNAc...) asparagine). Glu-131 (proton donor) is an active-site residue. Residues Asn-216, Asn-256, and Asn-350 are each glycosylated (N-linked (GlcNAc...) asparagine). 3 disulfides stabilise this stretch: Cys-358/Cys-369, Cys-363/Cys-418, and Cys-420/Cys-429. Positions 418 to 429 (CRCYPGWRGTWC) constitute an EGF-like domain.

It belongs to the glycosyl hydrolase 56 family. Highly expressed in spleen, kidney, and lung.

The protein localises to the secreted. The protein resides in the lysosome. It carries out the reaction Random hydrolysis of (1-&gt;4)-linkages between N-acetyl-beta-D-glucosamine and D-glucuronate residues in hyaluronate.. Functionally, may have a role in promoting tumor progression. May block the TGFB1-enhanced cell growth. This chain is Hyaluronidase-1 (HYAL1), found in Sus scrofa (Pig).